A 255-amino-acid chain; its full sequence is MPEKPTEDARFYGRRKGKPLRATRQRLLDTMLPALTLPLAGLGEGERLDPRGLFPRPVDQLWLEIGFGGGEHLVAQAAAHPEVGLIGSEVFAYGVGKALSQIDETGVDNIRLWPEDVRQVLPALPDGCLQRLFVLFPDPWPKRRHARRRMIQPARLDDFARLLADGGELRVASDDMGYVRWTLMHVTAHPAFRWTAQGPTDWRERPADWVETRYEAKALQAGRKPAYLIFRRRPRAADPGTLAEAPAGEGADNNP.

S-adenosyl-L-methionine is bound by residues Glu64, Glu89, Asp116, and Asp138. The active site involves Asp138. Substrate is bound by residues Lys142, Asp174, and 212–215 (TRYE).

Belongs to the class I-like SAM-binding methyltransferase superfamily. TrmB family.

The catalysed reaction is guanosine(46) in tRNA + S-adenosyl-L-methionine = N(7)-methylguanosine(46) in tRNA + S-adenosyl-L-homocysteine. It participates in tRNA modification; N(7)-methylguanine-tRNA biosynthesis. In terms of biological role, catalyzes the formation of N(7)-methylguanine at position 46 (m7G46) in tRNA. This Rhodospirillum rubrum (strain ATCC 11170 / ATH 1.1.1 / DSM 467 / LMG 4362 / NCIMB 8255 / S1) protein is tRNA (guanine-N(7)-)-methyltransferase.